The primary structure comprises 377 residues: Glutamate 5-kinase (377 aa).

Lys22 contributes to the ATP binding site. Residues Ser62, Asp149, and Asn161 each coordinate substrate. Residues 181-182 (TD) and 223-229 (TGGMVTK) each bind ATP. Positions 285–363 (RGVLVADSGA…AQLRRLLGEE (79 aa)) constitute a PUA domain.

Belongs to the glutamate 5-kinase family.

The protein resides in the cytoplasm. It catalyses the reaction L-glutamate + ATP = L-glutamyl 5-phosphate + ADP. Its pathway is amino-acid biosynthesis; L-proline biosynthesis; L-glutamate 5-semialdehyde from L-glutamate: step 1/2. Its function is as follows. Catalyzes the transfer of a phosphate group to glutamate to form L-glutamate 5-phosphate. In Bifidobacterium animalis subsp. lactis (strain AD011), this protein is Glutamate 5-kinase.